We begin with the raw amino-acid sequence, 346 residues long: MFGATQSTNRMNDFEVASPPDDSVSALEFSPSTVQKNFLVAGSWDSTVRCWEVEQNGATVPKSMKTMGGPVLDVCWSDDGSKVFVASCDKQVKLWDLASDQVMQVAAHDGPVKTCHMVKGPTYTCLMTGSWDKTLKFWDTRSPNPMMTINLPERCYCADVEYPMAVVGTANRGLIIYSLQNSPTEYKRQESPLKYQHRAISIFRDKKKEPTGCALGSIEGRVAIQYVNPGNPKDNFTFKCHRTTGTSGYQDIYAVNDIAFHPVHGTLVTVGSDGTFSFWDKDARTKLKSSETMDQSITKCGFNANGQIFAYAVGYDWSKGHEYFNPAKKPQIFLRSCYDELKPRIN.

4 WD repeats span residues 17–61 (ASPP…ATVP), 64–105 (MKTM…VMQV), 126–148 (LMTG…PMMT), and 255–289 (VNDI…KLKS).

The protein belongs to the WD repeat rae1 family. In terms of assembly, interacts with hiw; the interaction with Rae1 may protect hiw from autophagy-mediated degradation. Interacts with Nup98-96. Head (at protein level).

The protein localises to the cytoplasm. It is found in the perinuclear region. The protein resides in the nucleus. Its subcellular location is the nucleus envelope. It localises to the chromosome. In terms of biological role, probable component of the nuclear pore complex (NPC) which regulates the nuclear export of specific mRNAs and promotes cell cycle progression during mitosis and male meiosis. Acts with Nup98-96 to promote the nuclear export of specific mRNAs such as Moe, however it does not appear to be required for general nuclear mRNA transport. Essential mitotic and male meiotic cell cycle regulator with roles in many aspects of the cell cycle including chromatin organization and condensation, spindle assembly, chromosome segregation, and maintaining nuclear structure. During male meiosis it is required for completion of meiosis I, as well as accurate cytokinesis of the secondary spermatocytes, and postmeiotic differentiation of spermatids. Acts as a downstream regulatory target of the Hippo/SWH (Sav/Wts/Hpo) signaling pathway to promote mitotic cell cycle progression and proliferation during wing and eye development, and thereby plays a key role in integrating the regulation of proliferation with organ size control. When the Hippo/SWH signaling pathway is inactive, Rae1 acts independently of yki to increase organ size by promoting mitotic S-phase entry and increase cellular proliferation. When the Hippo/SWH signaling pathway is active it inhibits the activity of Rae1 in a Wts-dependent manner to restrict organ growth. However, Rae1 is also able to negatively regulate the levels and activity of yki likely by activating the core kinases of the Hippo/SWH signaling pathway hpo and Wts and increasing the protein levels of hpo, Mer and Wts; it is therefore likely that it functions as part of a negative feedback loop with the Hippo/SWH signaling pathway to regulate pathway homeostasis and prevent organ overgrowth. Promotes mitotic cell cycle progression, at least in part, by increasing the accumulation of mitotic cyclins such as CycB, possibly by directly up-regulating cyclin transcripts or by inhibiting the anaphase promoting complex/cyclosome (APC/C) activator fzy. Also required in presynaptic, postmitotic motor neurons to restrain synaptic terminal growth. Promotes the expression and stability of the an E3 ubiquitin ligase of hiw, and is likely to function in the regulation of synaptic growth by binding to hiw and protecting it from autophagy-mediated degradation. The polypeptide is Protein Rae1 (Drosophila melanogaster (Fruit fly)).